Reading from the N-terminus, the 383-residue chain is Probable assembly chaperone of rpl4 (383 aa).

The span at 1 to 12 (MGKPRPHKKKAS) shows a compositional bias: basic residues. The tract at residues 1-33 (MGKPRPHKKKASKTREKSVLSAGGSISKRKMNE) is disordered. 4 TPR repeats span residues 35–68 (PRKLLEQATILLQTGQADAALSIAQQALEIATSN), 73–106 (LSSLNTIAEIYVELGEIDLARKHFLQAVELDPTG), 116–147 (AEKFLWLAQLSELGGKDSVQWFEKGVGALRGI), and 193–226 (PEVLQTLASIRISQLREDDARAALSRSLELWKDL). The disordered stretch occupies residues 345 to 383 (NKELGEEMEDDSNVEDGEGEGEEEWEGIESDSDHEMADS). A compositionally biased stretch (acidic residues) spans 350-374 (EEMEDDSNVEDGEGEGEEEWEGIES).

The protein belongs to the ACL4 family.

The protein localises to the cytoplasm. The protein resides in the nucleus. In terms of biological role, acts as a chaperone for the L4 ribosomal subunit, required for hierarchical ribosome assembly. Shields ribosomal protein L4 until timely release and insertion into the pre-ribosome is possible, once ribosomal protein L18 is present. The polypeptide is Probable assembly chaperone of rpl4 (Emericella nidulans (strain FGSC A4 / ATCC 38163 / CBS 112.46 / NRRL 194 / M139) (Aspergillus nidulans)).